The following is a 560-amino-acid chain: NRAMP-like transporter smf-3 (560 aa).

The Cytoplasmic segment spans residues 1-43; that stretch reads MEGEMKCPIEEIREKPEMRKAQQTYEVQVEVEDTPDTTFSWRK. A helical transmembrane segment spans residues 44-64; that stretch reads LWAFTGPGFLMSIAYLDPGNI. The Extracellular segment spans residues 65–71; that stretch reads ESDLQAG. The chain crosses the membrane as a helical span at residues 72 to 92; that stretch reads AISYFKLIWVLLVAHIMGLLL. Residues 93–120 lie on the Cytoplasmic side of the membrane; the sequence is QRLAARLGVVSGKHMAEIAFSYYPKIPR. A helical transmembrane segment spans residues 121–141; it reads LVLWMLVESAIVGSDMQEVIG. Residues 142–152 lie on the Extracellular side of the membrane; that stretch reads TAISFYLLSNG. The helical transmembrane segment at 153–173 threads the bilayer; the sequence is VIPLWAGVLITICDTFTFLFL. Topologically, residues 174 to 182 are cytoplasmic; sequence EKYGVRKFE. The chain crosses the membrane as a helical span at residues 183–203; the sequence is AFFCFLITCMAITFGYEFGVS. The Extracellular portion of the chain corresponds to 204-229; that stretch reads APDAGKMFSGMFVPWCNGCDNNMVMQ. A helical membrane pass occupies residues 230–250; sequence GVAIIGAVIMPHNFYLHSALV. The Cytoplasmic portion of the chain corresponds to 251 to 268; sequence KSRRVDRRRAEKVTEANK. A helical membrane pass occupies residues 269-289; sequence YFFIESAFALFVSFIINTLVI. At 290–339 the chain is on the extracellular side; the sequence is SVFAQGMYGKTNQDIRDTCYNNTHNGMPDFYKVEFPANNDAAQSDIYHAG. Residue N310 is glycosylated (N-linked (GlcNAc...) asparagine). A helical membrane pass occupies residues 340–360; that stretch reads IFLGCTFGIFALYVWAVGILA. Residues 361–390 are Cytoplasmic-facing; it reads AGQSSTMTGTYAGQFAMEGFIQIKLPQWKR. The chain crosses the membrane as a helical span at residues 391–411; that stretch reads ILITRSLAILPTLAVVIFSGG. At 412–420 the chain is on the extracellular side; it reads IDNISSLND. N414 carries an N-linked (GlcNAc...) asparagine glycan. A helical membrane pass occupies residues 421-441; sequence FLNCLQLIQLPFALIPVLTFV. Residues 442–458 are Cytoplasmic-facing; the sequence is SDRNIMHEYKLASVSKV. A helical transmembrane segment spans residues 459–479; the sequence is VSIVISLIILFINFYFLYSWI. Residues 480–486 are Extracellular-facing; it reads GSTFGYN. A helical membrane pass occupies residues 487-507; sequence AVSIPITIFCAIFYIIFIAYL. Residues 508 to 560 lie on the Cytoplasmic side of the membrane; sequence TYYCLVAMEFISPIQTKWLAEPIYHDFDAPWLEDSENPSTKNTISDDELSMRY.

This sequence belongs to the NRAMP family. As to expression, expressed in dopaminergic neurons (at protein level). Expressed in intestine with a weaker expression in the most proximal and distal regions. Weakly expressed in the hyp1-6, hyp7 and hyp8-12 hypodermis and in head and tail neurons.

The protein resides in the apical cell membrane. It is found in the cytoplasmic vesicle membrane. Its function is as follows. Probable divalent metal ion transporter which regulates the uptake of several heavy metals such as Mn(2+), Al(3+) and iron. Plays a role in modulating Al(3+)-induced dopamine (DA) neuron degeneration through the intracellular sequestration of Al(3+). The chain is NRAMP-like transporter smf-3 from Caenorhabditis elegans.